The following is a 939-amino-acid chain: Phosphoenolpyruvate carboxylase (939 aa).

Residues His-151 and Lys-593 contribute to the active site.

This sequence belongs to the PEPCase type 1 family. Requires Mg(2+) as cofactor.

The enzyme catalyses oxaloacetate + phosphate = phosphoenolpyruvate + hydrogencarbonate. Forms oxaloacetate, a four-carbon dicarboxylic acid source for the tricarboxylic acid cycle. The protein is Phosphoenolpyruvate carboxylase of Gloeobacter violaceus (strain ATCC 29082 / PCC 7421).